Consider the following 316-residue polypeptide: Ribonuclease Z (316 aa).

Positions 63, 65, 67, 68, 143, 213, and 271 each coordinate Zn(2+). Asp-67 (proton acceptor) is an active-site residue.

Belongs to the RNase Z family. Homodimer. It depends on Zn(2+) as a cofactor.

The catalysed reaction is Endonucleolytic cleavage of RNA, removing extra 3' nucleotides from tRNA precursor, generating 3' termini of tRNAs. A 3'-hydroxy group is left at the tRNA terminus and a 5'-phosphoryl group is left at the trailer molecule.. Functionally, zinc phosphodiesterase, which displays some tRNA 3'-processing endonuclease activity. Probably involved in tRNA maturation, by removing a 3'-trailer from precursor tRNA. The protein is Ribonuclease Z of Bacteroides thetaiotaomicron (strain ATCC 29148 / DSM 2079 / JCM 5827 / CCUG 10774 / NCTC 10582 / VPI-5482 / E50).